An 863-amino-acid chain; its full sequence is DNA gyrase subunit A (863 aa).

The 464-residue stretch at 37–500 (LPDARDGLKP…DYDDIDIEDL (464 aa)) folds into the Topo IIA-type catalytic domain. Tyrosine 125 acts as the O-(5'-phospho-DNA)-tyrosine intermediate in catalysis. The GyrA-box signature appears at 527–533 (QKRGGKG).

This sequence belongs to the type II topoisomerase GyrA/ParC subunit family. Heterotetramer, composed of two GyrA and two GyrB chains. In the heterotetramer, GyrA contains the active site tyrosine that forms a transient covalent intermediate with DNA, while GyrB binds cofactors and catalyzes ATP hydrolysis.

Its subcellular location is the cytoplasm. The catalysed reaction is ATP-dependent breakage, passage and rejoining of double-stranded DNA.. Its function is as follows. A type II topoisomerase that negatively supercoils closed circular double-stranded (ds) DNA in an ATP-dependent manner to modulate DNA topology and maintain chromosomes in an underwound state. Negative supercoiling favors strand separation, and DNA replication, transcription, recombination and repair, all of which involve strand separation. Also able to catalyze the interconversion of other topological isomers of dsDNA rings, including catenanes and knotted rings. Type II topoisomerases break and join 2 DNA strands simultaneously in an ATP-dependent manner. The chain is DNA gyrase subunit A from Campylobacter jejuni subsp. jejuni serotype O:2 (strain ATCC 700819 / NCTC 11168).